Reading from the N-terminus, the 232-residue chain is Aspartate racemase (232 aa).

49-51 is a substrate binding site; the sequence is DRT. The Proton donor/acceptor role is filled by cysteine 84. Substrate-binding positions include 85 to 87 and lysine 166; that span reads NTA. Residue cysteine 195 is the Proton donor/acceptor of the active site.

Belongs to the aspartate/glutamate racemases family.

It catalyses the reaction L-aspartate = D-aspartate. In Thermococcus sp. (strain KS-8), this protein is Aspartate racemase.